The chain runs to 330 residues: Glycine betaine/proline betaine-binding periplasmic protein (330 aa).

The signal sequence occupies residues 1 to 21 (MRHSVLFATAFATLISTQTFA). Residues tryptophan 86, histidine 90, and 161–163 (WGC) contribute to the substrate site. Residues cysteine 157 and cysteine 163 are joined by a disulfide bond.

The complex is composed of two ATP-binding proteins (ProV), two transmembrane proteins (ProW) and a solute-binding protein (ProX).

The protein localises to the periplasm. Part of the ProU ABC transporter complex involved in glycine betaine and proline betaine uptake. Binds glycine betaine and proline betaine with high affinity. The polypeptide is Glycine betaine/proline betaine-binding periplasmic protein (Escherichia coli (strain K12)).